The chain runs to 397 residues: 3-ketoacyl-CoA thiolase, mitochondrial (397 aa).

The transit peptide at 1 to 16 directs the protein to the mitochondrion; not cleaved; sequence MALLRGVFIVAAKRTP. K25 bears the N6-acetyllysine; alternate mark. K25 bears the N6-succinyllysine; alternate mark. S28 is modified (phosphoserine). Position 45 is an N6-succinyllysine (K45). C92 functions as the Acyl-thioester intermediate in the catalytic mechanism. T119 is subject to Phosphothreonine. S121 is modified (phosphoserine). Position 127 is a phosphotyrosine (Y127). T136 bears the Phosphothreonine mark. An N6-acetyllysine; alternate mark is found at K137, K143, K158, K171, K191, and K209. An N6-succinyllysine; alternate mark is found at K137, K143, K158, K171, K191, and K209. 3 positions are modified to N6-succinyllysine: K211, K212, and K214. Residues R224 and T227 each coordinate CoA. The residue at position 234 (K234) is an N6-acetyllysine; alternate. N6-succinyllysine; alternate is present on K234. An N6-succinyllysine modification is found at K240. Position 241 is an N6-acetyllysine (K241). S251 is a binding site for CoA. K269 and K270 each carry N6-acetyllysine. K305 bears the N6-acetyllysine; alternate mark. K305 carries the post-translational modification N6-succinyllysine; alternate. The residue at position 310 (S310) is a Phosphoserine. K312 is modified (N6-acetyllysine; alternate). K312 is modified (N6-succinyllysine; alternate). At K340 the chain carries N6-acetyllysine. S344 bears the Phosphoserine mark. N6-acetyllysine is present on K375. Residue C382 is the Proton donor/acceptor of the active site.

The protein belongs to the thiolase-like superfamily. Thiolase family. As to quaternary structure, homotetramer. Interacts with BNIP3.

It localises to the mitochondrion. The catalysed reaction is an acyl-CoA + acetyl-CoA = a 3-oxoacyl-CoA + CoA. The enzyme catalyses 2 acetyl-CoA = acetoacetyl-CoA + CoA. It catalyses the reaction acetyl-CoA + H2O = acetate + CoA + H(+). It carries out the reaction propanoyl-CoA + H2O = propanoate + CoA + H(+). The catalysed reaction is butanoyl-CoA + H2O = butanoate + CoA + H(+). The enzyme catalyses hexanoyl-CoA + H2O = hexanoate + CoA + H(+). It catalyses the reaction octanoyl-CoA + H2O = octanoate + CoA + H(+). It carries out the reaction decanoyl-CoA + H2O = decanoate + CoA + H(+). The catalysed reaction is dodecanoyl-CoA + H2O = dodecanoate + CoA + H(+). The enzyme catalyses tetradecanoyl-CoA + H2O = tetradecanoate + CoA + H(+). It catalyses the reaction hexadecanoyl-CoA + H2O = hexadecanoate + CoA + H(+). Its pathway is lipid metabolism; fatty acid beta-oxidation. Its function is as follows. In the production of energy from fats, this is one of the enzymes that catalyzes the last step of the mitochondrial beta-oxidation pathway, an aerobic process breaking down fatty acids into acetyl-CoA. Using free coenzyme A/CoA, catalyzes the thiolytic cleavage of medium- to long-chain unbranched 3-oxoacyl-CoAs into acetyl-CoA and a fatty acyl-CoA shortened by two carbon atoms. Also catalyzes the condensation of two acetyl-CoA molecules into acetoacetyl-CoA and could be involved in the production of ketone bodies. Also displays hydrolase activity on various fatty acyl-CoAs. Thereby, could be responsible for the production of acetate in a side reaction to beta-oxidation. Abolishes BNIP3-mediated apoptosis and mitochondrial damage. In Mus musculus (Mouse), this protein is 3-ketoacyl-CoA thiolase, mitochondrial (Acaa2).